Here is a 730-residue protein sequence, read N- to C-terminus: Probable palmitoyltransferase AKR2 (730 aa).

ANK repeat units lie at residues 32–62 (FVVE…DINK), 66–95 (DELP…NVNQ), 100–129 (ERAT…NPTL), 133–166 (QGLN…NVDI), 172–201 (NNRT…TVAL), and 205–234 (RGFN…NFYE). 4 helical membrane-spanning segments follow: residues 283 to 303 (LMIF…SLIL), 309 to 328 (IALS…KFVL), 344 to 364 (TPFF…IWVK), and 376 to 396 (AKDA…LKLV). A DHHC domain is found at 429 to 479 (NFCVETLERKPLRSKYSLFSGALVARFNHYCPWVYNDIGLKNHKLFMFFAF). Cys-459 functions as the S-palmitoyl cysteine intermediate in the catalytic mechanism. Transmembrane regions (helical) follow at residues 473-493 (LFMF…WLCL) and 530-550 (TFFL…MLIV).

It belongs to the DHHC palmitoyltransferase family. AKR/ZDHHC17 subfamily.

The protein resides in the membrane. It carries out the reaction L-cysteinyl-[protein] + hexadecanoyl-CoA = S-hexadecanoyl-L-cysteinyl-[protein] + CoA. This is Probable palmitoyltransferase AKR2 (AKR2) from Saccharomyces uvarum (strain ATCC 76518 / CBS 7001 / CLIB 283 / NBRC 10550 / MCYC 623 / NCYC 2669 / NRRL Y-11845) (Yeast).